We begin with the raw amino-acid sequence, 178 residues long: NADH-quinone oxidoreductase subunit B 1 (178 aa).

Residues cysteine 39, cysteine 40, cysteine 104, and cysteine 135 each contribute to the [4Fe-4S] cluster site.

It belongs to the complex I 20 kDa subunit family. As to quaternary structure, NDH-1 is composed of 14 different subunits. Subunits NuoB, C, D, E, F, and G constitute the peripheral sector of the complex. It depends on [4Fe-4S] cluster as a cofactor.

The protein resides in the cell inner membrane. It catalyses the reaction a quinone + NADH + 5 H(+)(in) = a quinol + NAD(+) + 4 H(+)(out). Functionally, NDH-1 shuttles electrons from NADH, via FMN and iron-sulfur (Fe-S) centers, to quinones in the respiratory chain. The immediate electron acceptor for the enzyme in this species is believed to be a menaquinone. Couples the redox reaction to proton translocation (for every two electrons transferred, four hydrogen ions are translocated across the cytoplasmic membrane), and thus conserves the redox energy in a proton gradient. In Cytophaga hutchinsonii (strain ATCC 33406 / DSM 1761 / CIP 103989 / NBRC 15051 / NCIMB 9469 / D465), this protein is NADH-quinone oxidoreductase subunit B 1.